We begin with the raw amino-acid sequence, 1093 residues long: Isoleucine--tRNA ligase, chloroplastic/mitochondrial (1093 aa).

The disordered stretch occupies residues 69–103 (PNNEFGHSSKRRSRGPVMAAKKASEGEKQEDGKYK). The segment covering 90-103 (KASEGEKQEDGKYK) has biased composition (basic and acidic residues). Residues 155–165 (PYANGDLHMGH) carry the 'HIGH' region motif. Position 682 (Glu-682) interacts with L-isoleucyl-5'-AMP. A 'KMSKS' region motif is present at residues 723-727 (KMSKS). Lys-726 lines the ATP pocket. Zn(2+)-binding residues include Cys-1050, Cys-1053, Cys-1070, and Cys-1073.

Belongs to the class-I aminoacyl-tRNA synthetase family.

The protein resides in the plastid. It localises to the chloroplast. It is found in the mitochondrion. It carries out the reaction tRNA(Ile) + L-isoleucine + ATP = L-isoleucyl-tRNA(Ile) + AMP + diphosphate. The polypeptide is Isoleucine--tRNA ligase, chloroplastic/mitochondrial (Arabidopsis thaliana (Mouse-ear cress)).